We begin with the raw amino-acid sequence, 84 residues long: U8-theraphotoxin-Hhn1d (84 aa).

A signal peptide spans 1–21 (MKVVLIVCLVWVMAMMELVSC). Cystine bridges form between cysteine 23–cysteine 35, cysteine 29–cysteine 44, cysteine 34–cysteine 67, cysteine 54–cysteine 75, and cysteine 69–cysteine 81.

It belongs to the AVIT (prokineticin) family. In terms of tissue distribution, expressed by the venom gland.

It localises to the secreted. In Cyriopagopus hainanus (Chinese bird spider), this protein is U8-theraphotoxin-Hhn1d.